Consider the following 353-residue polypeptide: MTAIIERRESANLWSRFCDWITSTENRLYIGWFGVLMIPTLLTATSVFIIAFIAAPPVDIDGIREPVSGSLLYGNNIISGAIIPTSAAIGLHFYPIWEAASVDEWLYNGGPYELIVLHFLLGVACYMGREWELSFRLGMRPWIAVAYSAPVAAATAVFLIYPIGQGSFSDGMPLGISGTFNFMIVFQAEHNILMHPFHMLGVAGVFGGSLFSAMHGSLVTSSLIRETTENQSANAGYKFGQEEETYNIVAAHGYFGRLIFQYASFNNSRSLHFFLAAWPVAGIWFTALGISTMAFNLNGFNFNQSVVDSQGRVINTWADIINRANLGMEVMHERNAHNFPLDLAAVESISIGG.

The residue at position 2 (T2) is an N-acetylthreonine. T2 is subject to Phosphothreonine. 3 helical membrane passes run 29–46, 118–133, and 142–156; these read YIGW…TATS, HFLL…EWEL, and WIAV…AATA. A chlorophyll a-binding site is contributed by H118. Y126 lines the pheophytin a pocket. The [CaMn4O5] cluster site is built by D170 and E189. The chain crosses the membrane as a helical span at residues 197-218; the sequence is FHMLGVAGVFGGSLFSAMHGSL. H198 lines the chlorophyll a pocket. A quinone is bound by residues H215 and 264-265; that span reads SF. Fe cation is bound at residue H215. Residue H272 coordinates Fe cation. A helical membrane pass occupies residues 274–288; sequence FLAAWPVAGIWFTAL. Positions 332, 333, 342, and 344 each coordinate [CaMn4O5] cluster. The propeptide occupies 345–353; sequence AVESISIGG.

The protein belongs to the reaction center PufL/M/PsbA/D family. In terms of assembly, PSII is composed of 1 copy each of membrane proteins PsbA, PsbB, PsbC, PsbD, PsbE, PsbF, PsbH, PsbI, PsbJ, PsbK, PsbL, PsbM, PsbT, PsbX, PsbY, PsbZ, Psb30/Ycf12, at least 3 peripheral proteins of the oxygen-evolving complex and a large number of cofactors. It forms dimeric complexes. The cofactor is The D1/D2 heterodimer binds P680, chlorophylls that are the primary electron donor of PSII, and subsequent electron acceptors. It shares a non-heme iron and each subunit binds pheophytin, quinone, additional chlorophylls, carotenoids and lipids. D1 provides most of the ligands for the Mn4-Ca-O5 cluster of the oxygen-evolving complex (OEC). There is also a Cl(-1) ion associated with D1 and D2, which is required for oxygen evolution. The PSII complex binds additional chlorophylls, carotenoids and specific lipids.. In terms of processing, tyr-161 forms a radical intermediate that is referred to as redox-active TyrZ, YZ or Y-Z. C-terminally processed by CTPA; processing is essential to allow assembly of the oxygen-evolving complex and thus photosynthetic growth.

It localises to the plastid. The protein resides in the chloroplast thylakoid membrane. The enzyme catalyses 2 a plastoquinone + 4 hnu + 2 H2O = 2 a plastoquinol + O2. In terms of biological role, photosystem II (PSII) is a light-driven water:plastoquinone oxidoreductase that uses light energy to abstract electrons from H(2)O, generating O(2) and a proton gradient subsequently used for ATP formation. It consists of a core antenna complex that captures photons, and an electron transfer chain that converts photonic excitation into a charge separation. The D1/D2 (PsbA/PsbD) reaction center heterodimer binds P680, the primary electron donor of PSII as well as several subsequent electron acceptors. The chain is Photosystem II protein D1 from Pinus contorta (Shore pine).